A 317-amino-acid chain; its full sequence is Methionyl-tRNA formyltransferase (317 aa).

109–112 (SLLP) serves as a coordination point for (6S)-5,6,7,8-tetrahydrofolate.

The protein belongs to the Fmt family.

It carries out the reaction L-methionyl-tRNA(fMet) + (6R)-10-formyltetrahydrofolate = N-formyl-L-methionyl-tRNA(fMet) + (6S)-5,6,7,8-tetrahydrofolate + H(+). Its function is as follows. Attaches a formyl group to the free amino group of methionyl-tRNA(fMet). The formyl group appears to play a dual role in the initiator identity of N-formylmethionyl-tRNA by promoting its recognition by IF2 and preventing the misappropriation of this tRNA by the elongation apparatus. The protein is Methionyl-tRNA formyltransferase of Desulforamulus reducens (strain ATCC BAA-1160 / DSM 100696 / MI-1) (Desulfotomaculum reducens).